A 441-amino-acid polypeptide reads, in one-letter code: Eukaryotic translation initiation factor 3 subunit E (441 aa).

A PCI domain is found at 223 to 407 (IFFNHDNGRT…GTVIMEPTQP (185 aa)).

The protein belongs to the eIF-3 subunit E family. Component of the eukaryotic translation initiation factor 3 (eIF-3) complex (Potential). Binds to the translation initiation factors TIF3F1 and TIF3H1. Associates with the CSN (COP9 signalosome) complex. Interacts directly with CSN1, CSN4, CSN6A, CSN6B, CSN7, CSN8 and TIF3C1. Binds to 40S small ribosomal subunit S9 (RPS9B and RPS9C) via its N-terminal part. Interacts with the 26S proteasome subunit RPN12a via its C-terminal part. Also binds with At1g27930 and At4g30620.

The protein resides in the cytoplasm. It localises to the nucleus. Its function is as follows. Component of the eukaryotic translation initiation factor 3 (eIF-3) complex, which is involved in protein synthesis of a specialized repertoire of mRNAs and, together with other initiation factors, stimulates binding of mRNA and methionyl-tRNAi to the 40S ribosome. The eIF-3 complex specifically targets and initiates translation of a subset of mRNAs involved in cell proliferation (Potential). Negatively regulates translation during flower development. This Arabidopsis thaliana (Mouse-ear cress) protein is Eukaryotic translation initiation factor 3 subunit E.